The primary structure comprises 320 residues: Cytochrome f (320 aa).

The signal sequence occupies residues 1–35 (MKLNSLINLIQKSIYSCTLLLIILNIICVAPNSSN). Heme contacts are provided by phenylalanine 37, cysteine 57, cysteine 60, and histidine 61. The chain crosses the membrane as a helical span at residues 286 to 306 (IKGMIVFFFASVLAQIFFVLK).

The protein belongs to the cytochrome f family. The 4 large subunits of the cytochrome b6-f complex are cytochrome b6, subunit IV (17 kDa polypeptide, petD), cytochrome f and the Rieske protein, while the 4 small subunits are PetG, PetL, PetM and PetN. The complex functions as a dimer. Heme is required as a cofactor.

It is found in the plastid. Its subcellular location is the chloroplast thylakoid membrane. In terms of biological role, component of the cytochrome b6-f complex, which mediates electron transfer between photosystem II (PSII) and photosystem I (PSI), cyclic electron flow around PSI, and state transitions. The sequence is that of Cytochrome f from Pyropia yezoensis (Susabi-nori).